The following is a 282-amino-acid chain: Bicarbonate transport ATP-binding protein CmpD (282 aa).

The 234-residue stretch at 24–257 (LTIENVSKVY…RPRDRDRIME (234 aa)) folds into the ABC transporter domain. 60 to 67 (GHSGCGKS) provides a ligand contact to ATP.

Belongs to the ABC transporter superfamily. Nitrate/nitrite/cyanate uptake transporter (NitT) (TC 3.A.1.16) family. The complex is composed of two ATP-binding proteins (CmpC and CmpD), a transmembrane protein (CmpB) and a solute-binding protein (CmpA).

Its subcellular location is the cell inner membrane. Part of the ABC transporter complex CmpABCD involved in bicarbonate transport. Responsible for energy coupling to the transport system. This is Bicarbonate transport ATP-binding protein CmpD (cmpD) from Synechocystis sp. (strain ATCC 27184 / PCC 6803 / Kazusa).